The primary structure comprises 257 residues: Probable S-adenosylmethionine-dependent methyltransferase MSMEG_2350/MSMEI_2290 (257 aa).

This sequence belongs to the methyltransferase superfamily.

Functionally, probable S-adenosylmethionine-dependent methyltransferase required for the 6-O-methylation of the polysaccharide backbone of 6-O-methylglucosyl lipopolysaccharides (MGLP). The chain is Probable S-adenosylmethionine-dependent methyltransferase MSMEG_2350/MSMEI_2290 from Mycolicibacterium smegmatis (strain ATCC 700084 / mc(2)155) (Mycobacterium smegmatis).